The sequence spans 200 residues: Holliday junction resolvase RecU (200 aa).

Residues 1-25 form a disordered region; that stretch reads MTIRYPNGKRYNQASQPQKTPIKTH. Polar residues predominate over residues 10-25; sequence RYNQASQPQKTPIKTH. Residues Thr85, Asp87, Glu100, and Gln119 each coordinate Mg(2+).

This sequence belongs to the RecU family. Mg(2+) is required as a cofactor.

The protein resides in the cytoplasm. The enzyme catalyses Endonucleolytic cleavage at a junction such as a reciprocal single-stranded crossover between two homologous DNA duplexes (Holliday junction).. Endonuclease that resolves Holliday junction intermediates in genetic recombination. Cleaves mobile four-strand junctions by introducing symmetrical nicks in paired strands. Promotes annealing of linear ssDNA with homologous dsDNA. Required for DNA repair, homologous recombination and chromosome segregation. The sequence is that of Holliday junction resolvase RecU from Bacillus cereus (strain B4264).